The primary structure comprises 87 residues: Small ribosomal subunit protein uS17 (87 aa).

This sequence belongs to the universal ribosomal protein uS17 family. As to quaternary structure, part of the 30S ribosomal subunit.

In terms of biological role, one of the primary rRNA binding proteins, it binds specifically to the 5'-end of 16S ribosomal RNA. In Staphylococcus aureus (strain Mu3 / ATCC 700698), this protein is Small ribosomal subunit protein uS17.